The following is a 126-amino-acid chain: Small ribosomal subunit protein bS6 (126 aa).

This sequence belongs to the bacterial ribosomal protein bS6 family.

Binds together with bS18 to 16S ribosomal RNA. This Actinobacillus succinogenes (strain ATCC 55618 / DSM 22257 / CCUG 43843 / 130Z) protein is Small ribosomal subunit protein bS6.